A 252-amino-acid polypeptide reads, in one-letter code: Imidazole glycerol phosphate synthase subunit HisF (252 aa).

Catalysis depends on residues Asp11 and Asp130.

Belongs to the HisA/HisF family. In terms of assembly, heterodimer of HisH and HisF.

It is found in the cytoplasm. The enzyme catalyses 5-[(5-phospho-1-deoxy-D-ribulos-1-ylimino)methylamino]-1-(5-phospho-beta-D-ribosyl)imidazole-4-carboxamide + L-glutamine = D-erythro-1-(imidazol-4-yl)glycerol 3-phosphate + 5-amino-1-(5-phospho-beta-D-ribosyl)imidazole-4-carboxamide + L-glutamate + H(+). The protein operates within amino-acid biosynthesis; L-histidine biosynthesis; L-histidine from 5-phospho-alpha-D-ribose 1-diphosphate: step 5/9. Functionally, IGPS catalyzes the conversion of PRFAR and glutamine to IGP, AICAR and glutamate. The HisF subunit catalyzes the cyclization activity that produces IGP and AICAR from PRFAR using the ammonia provided by the HisH subunit. The protein is Imidazole glycerol phosphate synthase subunit HisF of Bacillus pumilus (strain SAFR-032).